Here is a 396-residue protein sequence, read N- to C-terminus: Tryptophan synthase beta chain (396 aa).

An N6-(pyridoxal phosphate)lysine modification is found at K86.

Belongs to the TrpB family. As to quaternary structure, tetramer of two alpha and two beta chains. The cofactor is pyridoxal 5'-phosphate.

The catalysed reaction is (1S,2R)-1-C-(indol-3-yl)glycerol 3-phosphate + L-serine = D-glyceraldehyde 3-phosphate + L-tryptophan + H2O. Its pathway is amino-acid biosynthesis; L-tryptophan biosynthesis; L-tryptophan from chorismate: step 5/5. Its function is as follows. The beta subunit is responsible for the synthesis of L-tryptophan from indole and L-serine. This is Tryptophan synthase beta chain from Aliivibrio fischeri (strain ATCC 700601 / ES114) (Vibrio fischeri).